A 631-amino-acid chain; its full sequence is tRNA uridine 5-carboxymethylaminomethyl modification enzyme MnmG (631 aa).

Residues 13–18 (GGGHAG), V125, and S180 each bind FAD. 273–287 (GPRYCPSIEDKVMRF) contacts NAD(+). Residue Q370 participates in FAD binding.

The protein belongs to the MnmG family. Homodimer. Heterotetramer of two MnmE and two MnmG subunits. Requires FAD as cofactor.

Its subcellular location is the cytoplasm. In terms of biological role, NAD-binding protein involved in the addition of a carboxymethylaminomethyl (cmnm) group at the wobble position (U34) of certain tRNAs, forming tRNA-cmnm(5)s(2)U34. The protein is tRNA uridine 5-carboxymethylaminomethyl modification enzyme MnmG of Vibrio campbellii (strain ATCC BAA-1116).